The primary structure comprises 56 residues: Frontoxin I (56 aa).

Intrachain disulfides connect C3–C22, C17–C39, C41–C52, and C53–C56.

This sequence belongs to the three-finger toxin family. Short-chain subfamily. Type I alpha-neurotoxin sub-subfamily. In terms of tissue distribution, expressed by the venom gland.

It localises to the secreted. Functionally, binds to muscle nicotinic acetylcholine receptor (nAChR) and inhibit acetylcholine from binding to the receptor, thereby impairing neuromuscular transmission. The polypeptide is Frontoxin I (Micrurus frontalis (Coral snake)).